The primary structure comprises 445 residues: 6-phosphogluconate dehydrogenase, decarboxylating (445 aa).

NADP(+) is bound by residues 1-4 (AVMG), 22-24 (NRS), 63-65 (VKA), and Asn91. Substrate is bound by residues Asn91 and 117 to 119 (SGG). Lys172 serves as the catalytic Proton acceptor. A substrate-binding site is contributed by 175 to 176 (HN). Glu179 acts as the Proton donor in catalysis. 5 residues coordinate substrate: Tyr180, Lys249, Arg276, Arg434, and His440.

Belongs to the 6-phosphogluconate dehydrogenase family. As to quaternary structure, homodimer.

It carries out the reaction 6-phospho-D-gluconate + NADP(+) = D-ribulose 5-phosphate + CO2 + NADPH. The protein operates within carbohydrate degradation; pentose phosphate pathway; D-ribulose 5-phosphate from D-glucose 6-phosphate (oxidative stage): step 3/3. Catalyzes the oxidative decarboxylation of 6-phosphogluconate to ribulose 5-phosphate and CO(2), with concomitant reduction of NADP to NADPH. This is 6-phosphogluconate dehydrogenase, decarboxylating (gnd) from Shigella sonnei.